Here is a 417-residue protein sequence, read N- to C-terminus: Acid phosphatase (417 aa).

The N-terminal stretch at 1–19 (MFTKQSLVTLLGGLSLAVA) is a signal peptide. Asn-122, Asn-187, and Asn-209 each carry an N-linked (GlcNAc...) asparagine glycan. The active-site Proton donor is Asp-216. 3 N-linked (GlcNAc...) asparagine glycosylation sites follow: Asn-218, Asn-333, and Asn-383.

The N-terminus is blocked.

The protein resides in the secreted. It carries out the reaction a phosphate monoester + H2O = an alcohol + phosphate. The polypeptide is Acid phosphatase (phoA) (Aspergillus niger).